A 152-amino-acid chain; its full sequence is UPF0178 protein YE1167 (152 aa).

This sequence belongs to the UPF0178 family.

This Yersinia enterocolitica serotype O:8 / biotype 1B (strain NCTC 13174 / 8081) protein is UPF0178 protein YE1167.